Reading from the N-terminus, the 162-residue chain is Lipoprotein signal peptidase (162 aa).

2 helical membrane-spanning segments follow: residues 66–86 (PFFI…FRKL) and 92–112 (LAAV…IDRV). Residues aspartate 119 and aspartate 137 contribute to the active site. The helical transmembrane segment at 132 to 152 (AFNVADSAICVGVALLALDMI) threads the bilayer.

Belongs to the peptidase A8 family.

The protein resides in the cell inner membrane. It catalyses the reaction Release of signal peptides from bacterial membrane prolipoproteins. Hydrolyzes -Xaa-Yaa-Zaa-|-(S,diacylglyceryl)Cys-, in which Xaa is hydrophobic (preferably Leu), and Yaa (Ala or Ser) and Zaa (Gly or Ala) have small, neutral side chains.. Its pathway is protein modification; lipoprotein biosynthesis (signal peptide cleavage). Functionally, this protein specifically catalyzes the removal of signal peptides from prolipoproteins. This chain is Lipoprotein signal peptidase, found in Geobacter metallireducens (strain ATCC 53774 / DSM 7210 / GS-15).